The primary structure comprises 416 residues: Glyceraldehyde-3-phosphate dehydrogenase, chloroplastic (416 aa).

The transit peptide at 1–78 (MAFVAPVSSV…APARTSNAPS (78 aa)) directs the protein to the chloroplast. NADP(+) contacts are provided by residues 90–91 (RI), D114, and R158. D-glyceraldehyde 3-phosphate-binding positions include 232 to 234 (SCT), T263, R278, 291 to 292 (TG), and R314. Residue C233 is the Nucleophile of the active site. Position 396 (N396) interacts with NADP(+).

The protein belongs to the glyceraldehyde-3-phosphate dehydrogenase family. As to quaternary structure, homotetramer.

The protein localises to the plastid. It localises to the chloroplast. The enzyme catalyses D-glyceraldehyde 3-phosphate + phosphate + NADP(+) = (2R)-3-phospho-glyceroyl phosphate + NADPH + H(+). It participates in carbohydrate biosynthesis; Calvin cycle. The chain is Glyceraldehyde-3-phosphate dehydrogenase, chloroplastic (GAPA) from Gracilaria gracilis (Red alga).